The primary structure comprises 242 residues: uncharacterized protein (242 aa).

The Response regulatory domain maps to 3 to 116; the sequence is TALVIDDEPF…RLRKTVKRLS (114 aa). Position 54 is a 4-aspartylphosphate (D54). Positions 139–240 constitute an HTH LytTR-type domain; the sequence is IPCIGHNRIV…LKLLKEMLGL (102 aa).

This is an uncharacterized protein from Vibrio vulnificus (strain CMCP6).